The following is a 188-amino-acid chain: Peptidyl-tRNA hydrolase (188 aa).

F15 provides a ligand contact to tRNA. H20 serves as the catalytic Proton acceptor. Positions 64, 66, and 112 each coordinate tRNA.

Belongs to the PTH family. Monomer.

It localises to the cytoplasm. It catalyses the reaction an N-acyl-L-alpha-aminoacyl-tRNA + H2O = an N-acyl-L-amino acid + a tRNA + H(+). In terms of biological role, hydrolyzes ribosome-free peptidyl-tRNAs (with 1 or more amino acids incorporated), which drop off the ribosome during protein synthesis, or as a result of ribosome stalling. Catalyzes the release of premature peptidyl moieties from peptidyl-tRNA molecules trapped in stalled 50S ribosomal subunits, and thus maintains levels of free tRNAs and 50S ribosomes. The chain is Peptidyl-tRNA hydrolase from Borreliella afzelii (strain PKo) (Borrelia afzelii).